The primary structure comprises 3394 residues: Protein PFC0760c (3394 aa).

3 stretches are compositionally biased toward low complexity: residues 471 to 508 (NNND…NYNN), 515 to 528 (NMNS…NNLH), and 786 to 841 (NNQN…NQNN). Disordered stretches follow at residues 471 to 539 (NNND…DENN), 779 to 844 (MSSN…NAGI), 1038 to 1099 (NKKK…NNDD), 1892 to 1918 (TTTT…NNND), 2648 to 2693 (KMDL…DNHL), 2835 to 2909 (AKNE…NSNN), 3000 to 3057 (VSVG…DVNT), and 3107 to 3394 (DYVN…NSEE). A compositionally biased stretch (basic and acidic residues) spans 1038–1097 (NKKKNNDGDNKSQEDDDGNKKKNNDGDNKSQEDDDGNKKKNNDGDNKSQEDDYGNKKKNN). Acidic residues predominate over residues 2657-2671 (GDDDDDDDDDDDDDN). The span at 2672 to 2686 (NNNNNNNNNNNNNNM) shows a compositional bias: low complexity. A compositionally biased stretch (polar residues) spans 2836-2846 (KNENYPVSTHY). 2 stretches are compositionally biased toward low complexity: residues 2855 to 2865 (DNINNDNNNDN) and 2872 to 2909 (NDNI…NSNN). Acidic residues-rich tracts occupy residues 3007–3047 (DNND…EEKE) and 3147–3257 (DDDE…DDND). The segment covering 3258–3292 (NDHNDDNNDEEKYSCHDDKNEHTNNDLLNIDHDNN) has biased composition (basic and acidic residues). Over residues 3300 to 3309 (LYSTYNVSVS) the composition is skewed to polar residues. Over residues 3310 to 3320 (HNKDPSNKENE) the composition is skewed to basic and acidic residues. Residues 3321–3330 (IQNLISIDSS) are compositionally biased toward polar residues. A compositionally biased stretch (acidic residues) spans 3331-3379 (NENDENDENDENDENDENDENDENDENDENDENDEKDENDENDENDENF). The span at 3385–3394 (GTLNEMNSEE) shows a compositional bias: polar residues.

The protein is Protein PFC0760c of Plasmodium falciparum (isolate 3D7).